The chain runs to 388 residues: Succinate--CoA ligase [ADP-forming] subunit beta (388 aa).

Residues 9 to 244 (KQLFQKYGVP…LDEEDPFEIE (236 aa)) enclose the ATP-grasp domain. ATP-binding positions include lysine 46, 53 to 55 (GRG), glutamate 99, leucine 102, and glutamate 107. Positions 199 and 213 each coordinate Mg(2+). Substrate-binding positions include asparagine 265 and 322–324 (GIL).

Belongs to the succinate/malate CoA ligase beta subunit family. Heterotetramer of two alpha and two beta subunits. Requires Mg(2+) as cofactor.

The enzyme catalyses succinate + ATP + CoA = succinyl-CoA + ADP + phosphate. It catalyses the reaction GTP + succinate + CoA = succinyl-CoA + GDP + phosphate. It participates in carbohydrate metabolism; tricarboxylic acid cycle; succinate from succinyl-CoA (ligase route): step 1/1. Its function is as follows. Succinyl-CoA synthetase functions in the citric acid cycle (TCA), coupling the hydrolysis of succinyl-CoA to the synthesis of either ATP or GTP and thus represents the only step of substrate-level phosphorylation in the TCA. The beta subunit provides nucleotide specificity of the enzyme and binds the substrate succinate, while the binding sites for coenzyme A and phosphate are found in the alpha subunit. This is Succinate--CoA ligase [ADP-forming] subunit beta from Syntrophobacter fumaroxidans (strain DSM 10017 / MPOB).